Reading from the N-terminus, the 431-residue chain is Enolase (431 aa).

Residue Gln-167 participates in (2R)-2-phosphoglycerate binding. The active-site Proton donor is the Glu-209. Mg(2+)-binding residues include Asp-246, Glu-290, and Asp-316. 4 residues coordinate (2R)-2-phosphoglycerate: Lys-341, Arg-370, Ser-371, and Lys-392. Lys-341 functions as the Proton acceptor in the catalytic mechanism.

This sequence belongs to the enolase family. As to quaternary structure, component of the RNA degradosome, a multiprotein complex involved in RNA processing and mRNA degradation. Mg(2+) is required as a cofactor.

The protein localises to the cytoplasm. The protein resides in the secreted. Its subcellular location is the cell surface. The catalysed reaction is (2R)-2-phosphoglycerate = phosphoenolpyruvate + H2O. It functions in the pathway carbohydrate degradation; glycolysis; pyruvate from D-glyceraldehyde 3-phosphate: step 4/5. Functionally, catalyzes the reversible conversion of 2-phosphoglycerate (2-PG) into phosphoenolpyruvate (PEP). It is essential for the degradation of carbohydrates via glycolysis. The protein is Enolase of Shigella flexneri serotype 5b (strain 8401).